The primary structure comprises 734 residues: 5-methyltetrahydropteroyltriglutamate--homocysteine methyltransferase (734 aa).

5-methyltetrahydropteroyltri-L-glutamate-binding positions include 15–18 and Lys-104; that span reads REFK. Residues 409–411 and Glu-462 contribute to the L-homocysteine site; that span reads IGS. L-methionine-binding positions include 409–411 and Glu-462; that span reads IGS. Residues 493–494 and Trp-539 contribute to the 5-methyltetrahydropteroyltri-L-glutamate site; that span reads RC. An L-homocysteine-binding site is contributed by Asp-577. Position 577 (Asp-577) interacts with L-methionine. Glu-583 contacts 5-methyltetrahydropteroyltri-L-glutamate. His-618, Cys-620, and Glu-642 together coordinate Zn(2+). His-672 (proton donor) is an active-site residue. Cys-704 provides a ligand contact to Zn(2+).

Belongs to the vitamin-B12 independent methionine synthase family. Requires Zn(2+) as cofactor.

It carries out the reaction 5-methyltetrahydropteroyltri-L-glutamate + L-homocysteine = tetrahydropteroyltri-L-glutamate + L-methionine. The protein operates within amino-acid biosynthesis; L-methionine biosynthesis via de novo pathway; L-methionine from L-homocysteine (MetE route): step 1/1. Functionally, catalyzes the transfer of a methyl group from 5-methyltetrahydrofolate to homocysteine resulting in methionine formation. The sequence is that of 5-methyltetrahydropteroyltriglutamate--homocysteine methyltransferase from Thermotoga maritima (strain ATCC 43589 / DSM 3109 / JCM 10099 / NBRC 100826 / MSB8).